A 658-amino-acid polypeptide reads, in one-letter code: Protein cueball (658 aa).

Over 1–543 (MSGVTARMEN…SYCKNSFNRT (543 aa)) the chain is Extracellular. Asn25 and Asn122 each carry an N-linked (GlcNAc...) asparagine glycan. LDL-receptor class B repeat units follow at residues 100-142 (RKLY…NHDL), 152-195 (RHLY…DHYS), and 196-241 (NRIY…NSRY). EGF-like domains are found at residues 352 to 384 (EIPI…FEGE), 387 to 422 (DRSK…KRCE), and 458 to 495 (EEYT…KRCE). 8 disulfides stabilise this stretch: Cys356–Cys365, Cys360–Cys375, Cys391–Cys401, Cys395–Cys410, Cys412–Cys421, Cys462–Cys472, Cys466–Cys483, and Cys485–Cys494. Residues Asn400 and Asn415 are each glycosylated (N-linked (GlcNAc...) asparagine). An N-linked (GlcNAc...) asparagine glycan is attached at Asn476. A glycan (N-linked (GlcNAc...) asparagine) is linked at Asn541. The chain crosses the membrane as a helical span at residues 544-564 (VVYASLAFAASLFILMVILLI). Residues 565-658 (VRRFYEEGRP…SCAGGDKNLP (94 aa)) lie on the Cytoplasmic side of the membrane.

The protein belongs to the cueball family.

It is found in the cell membrane. Has a role in spermatogenesis and oogenesis. The polypeptide is Protein cueball (Culex quinquefasciatus (Southern house mosquito)).